A 350-amino-acid polypeptide reads, in one-letter code: S-adenosylmethionine:tRNA ribosyltransferase-isomerase (350 aa).

Belongs to the QueA family. Monomer.

The protein localises to the cytoplasm. The catalysed reaction is 7-aminomethyl-7-carbaguanosine(34) in tRNA + S-adenosyl-L-methionine = epoxyqueuosine(34) in tRNA + adenine + L-methionine + 2 H(+). It functions in the pathway tRNA modification; tRNA-queuosine biosynthesis. Transfers and isomerizes the ribose moiety from AdoMet to the 7-aminomethyl group of 7-deazaguanine (preQ1-tRNA) to give epoxyqueuosine (oQ-tRNA). This Bacillus thuringiensis subsp. konkukian (strain 97-27) protein is S-adenosylmethionine:tRNA ribosyltransferase-isomerase.